Here is a 154-residue protein sequence, read N- to C-terminus: UPF0756 membrane protein BLi03063/BL00400 (154 aa).

A run of 4 helical transmembrane segments spans residues 8–28 (FLILLLAIALIAKNQSLIIAV), 54–74 (WGVTVITIAVLVPIATGEIGF), 87–107 (WIALGAGILVALIAKNGITLL), and 117–137 (LVFGTILAVALFKGVAVGPLI).

Belongs to the UPF0756 family.

The protein resides in the cell membrane. The polypeptide is UPF0756 membrane protein BLi03063/BL00400 (Bacillus licheniformis (strain ATCC 14580 / DSM 13 / JCM 2505 / CCUG 7422 / NBRC 12200 / NCIMB 9375 / NCTC 10341 / NRRL NRS-1264 / Gibson 46)).